Here is a 308-residue protein sequence, read N- to C-terminus: Zinc finger CCCH domain-containing protein 15 (308 aa).

Positions 1–21 (MENKIAPFSYSGSSAGNSSSG) are disordered. The span at 9-21 (SYSGSSAGNSSSG) shows a compositional bias: low complexity. Residues 56-91 (TRLHEASLEAEALRLENTELRSMNLRLKNELNSLIR) are a coiled coil. Residues 110–190 (LSIGGNDADE…GTVTKPGTCG (81 aa)) are disordered. Position 111 is a phosphoserine (serine 111). A compositionally biased stretch (polar residues) spans 148–164 (RSSLPKSISVRSNGYSK). 2 C3H1-type zinc fingers span residues 222–250 (MTKTELCNKWQETGTCPYGDHCQFAHGIK) and 260–288 (RYKTEVCRMVLAGDNCPYGHRCHFRHSLS).

In terms of processing, phosphorylated at Ser-111 by ASK7/BIN2 in the cytoplasm in the absence of brassinosteroids (BRs). As to expression, highly expressed in secondary cell wall-forming tissues and the xylem cells of roots. Expressed predominantly in inflorescence stems, flowers and siliques. Highly expressed in the basal portion of stems, where cells are undergoing secondary cell wall thickening. Highly expressed in meiocytes and tapetum from anthers.

Its subcellular location is the cytoplasm. It localises to the nucleus. Functions probably as a transcriptional factor that activates genes involved in secondary cell wall biosynthesis. Functions redudantly with C3H14 to regulate secondary cell wall formation. C3H14 and C3H15 have overlapping roles in the regulation of secondary cell wall formation and anther development. C3H14 may contribute more to secondary cell wall thickening while C3H15 could be more important in anther development. May regulate at both the transcriptional and post-transcriptional levels the expression of many genes involved in various biological processes, particularly those associated with cell wall metabolism and pollen development. Involved in the regulation of callose metabolism in male meiocytes, in integrity of newly formed microspores, and promotes male fertility. May be involved in the regulation of the callose synthesis genes CALS5 and CALS12, the potential degradation of callose walls-related genes A6 and MYB80, as well as other putative beta-1,3-glucanase genes. Negatively regulates cell elongation by inhibiting brassinosteroid (BR) signaling. Functions downstream of the BRI1 receptor as a negative regulator in the BR pathway. The protein is Zinc finger CCCH domain-containing protein 15 of Arabidopsis thaliana (Mouse-ear cress).